Reading from the N-terminus, the 210-residue chain is Glycerol-3-phosphate acyltransferase (210 aa).

6 consecutive transmembrane segments (helical) span residues 8–28 (LILL…LLLT), 56–76 (GLAA…VLIA), 87–107 (TMAV…WLGF), 119–139 (TIWV…LLVA), 144–164 (ISSA…VLLS), and 165–185 (GRPL…LIWA).

It belongs to the PlsY family. As to quaternary structure, probably interacts with PlsX.

It localises to the cell inner membrane. The catalysed reaction is an acyl phosphate + sn-glycerol 3-phosphate = a 1-acyl-sn-glycero-3-phosphate + phosphate. It participates in lipid metabolism; phospholipid metabolism. Functionally, catalyzes the transfer of an acyl group from acyl-phosphate (acyl-PO(4)) to glycerol-3-phosphate (G3P) to form lysophosphatidic acid (LPA). This enzyme utilizes acyl-phosphate as fatty acyl donor, but not acyl-CoA or acyl-ACP. The protein is Glycerol-3-phosphate acyltransferase of Gluconobacter oxydans (strain 621H) (Gluconobacter suboxydans).